Here is a 250-residue protein sequence, read N- to C-terminus: 2,3-bisphosphoglycerate-dependent phosphoglycerate mutase (250 aa).

Substrate-binding positions include arginine 8–asparagine 15, threonine 21–glycine 22, arginine 60, glutamate 87–tyrosine 90, lysine 98, arginine 114–arginine 115, and glycine 183–asparagine 184. Catalysis depends on histidine 9, which acts as the Tele-phosphohistidine intermediate. The Proton donor/acceptor role is filled by glutamate 87.

This sequence belongs to the phosphoglycerate mutase family. BPG-dependent PGAM subfamily. In terms of assembly, homodimer.

The enzyme catalyses (2R)-2-phosphoglycerate = (2R)-3-phosphoglycerate. Its pathway is carbohydrate degradation; glycolysis; pyruvate from D-glyceraldehyde 3-phosphate: step 3/5. Functionally, catalyzes the interconversion of 2-phosphoglycerate and 3-phosphoglycerate. The polypeptide is 2,3-bisphosphoglycerate-dependent phosphoglycerate mutase (Nitratidesulfovibrio vulgaris (strain ATCC 29579 / DSM 644 / CCUG 34227 / NCIMB 8303 / VKM B-1760 / Hildenborough) (Desulfovibrio vulgaris)).